We begin with the raw amino-acid sequence, 92 residues long: U21-hexatoxin-Hi1a (92 aa).

An N-terminal signal peptide occupies residues 1 to 19; it reads MKTILSMLIFVALFAAIVG. Intrachain disulfides connect Cys-41–Cys-55, Cys-48–Cys-67, Cys-54–Cys-82, and Cys-85–Cys-92.

It belongs to the neurotoxin 21 family. Expressed by the venom gland.

It localises to the secreted. In terms of biological role, potent insecticidal toxin with probable ion channel impairing activity. In vivo, reversibly paralyzes all flies within 30 minutes, even at low dose (0.3 nmol/g). This is U21-hexatoxin-Hi1a from Hadronyche infensa (Fraser island funnel-web spider).